The chain runs to 627 residues: Phosphomethylpyrimidine synthase (627 aa).

Substrate contacts are provided by residues Asn-233, Met-262, Tyr-291, His-327, 347–349, 388–391, and Glu-427; these read SRG and DGLR. His-431 serves as a coordination point for Zn(2+). Tyr-454 lines the substrate pocket. Position 495 (His-495) interacts with Zn(2+). Positions 575, 578, and 583 each coordinate [4Fe-4S] cluster.

Belongs to the ThiC family. Homodimer. [4Fe-4S] cluster serves as cofactor.

It catalyses the reaction 5-amino-1-(5-phospho-beta-D-ribosyl)imidazole + S-adenosyl-L-methionine = 4-amino-2-methyl-5-(phosphooxymethyl)pyrimidine + CO + 5'-deoxyadenosine + formate + L-methionine + 3 H(+). Its pathway is cofactor biosynthesis; thiamine diphosphate biosynthesis. Functionally, catalyzes the synthesis of the hydroxymethylpyrimidine phosphate (HMP-P) moiety of thiamine from aminoimidazole ribotide (AIR) in a radical S-adenosyl-L-methionine (SAM)-dependent reaction. In Acidithiobacillus ferrooxidans (strain ATCC 23270 / DSM 14882 / CIP 104768 / NCIMB 8455) (Ferrobacillus ferrooxidans (strain ATCC 23270)), this protein is Phosphomethylpyrimidine synthase.